The sequence spans 340 residues: MADTATTASAAAASAASASSDAPPFQLGKPRFQQTSFYGRFRHFLDIIDPRTLFVTERRLREAVQLLEDYKHGTLRPGVTNEQLWSAQKIKQAILHPDTNEKIFMPFRMSGYIPFGTPIVVGLLLPNQTLASTVFWQWLNQSHNACVNYANRNATKPSPASKFIQGYLGAVISAVSIAVGLNVLVQKANKFTPATRLLIQRFVPFPAVASANICNVVLMRYGELEEGIDVLDSDGNLVGSSKIAARHALLETALTRVVLPMPILVLPPIVMSMLEKTALLQARPRLLLPVQSLVCLAAFGLALPLAISLFPQMSEIETSQLEPEIAQATSSRTVVYNKGL.

4 consecutive transmembrane segments (helical) span residues 103-123 (IFMPFRMSGYIPFGTPIVVGL), 163-183 (FIQGYLGAVISAVSIAVGLNV), 254-274 (LTRVVLPMPILVLPPIVMSML), and 287-307 (LLPVQSLVCLAAFGLALPLAI).

The protein belongs to the sideroflexin family. In terms of tissue distribution, primarily expressed in the brain.

The protein localises to the mitochondrion inner membrane. It catalyses the reaction citrate(in) = citrate(out). In terms of biological role, mitochondrial amino-acid transporter. Transports citrate. Does not act as a serine transporter: not able to mediate transport of serine into mitochondria. In brown adipose tissue, plays a role in the regulation of UCP1-dependent thermogenesis probably by supporting mitochondrial glycerol-3-phosphate utilization. This Homo sapiens (Human) protein is Sideroflexin-5.